The primary structure comprises 34 residues: Photosystem II reaction center protein Psb30 (34 aa).

Residues I6–L26 traverse the membrane as a helical segment.

This sequence belongs to the Psb30/Ycf12 family. In terms of assembly, PSII is composed of 1 copy each of membrane proteins PsbA, PsbB, PsbC, PsbD, PsbE, PsbF, PsbH, PsbI, PsbJ, PsbK, PsbL, PsbM, PsbT, PsbX, PsbY, PsbZ, Psb30/Ycf12, peripheral proteins of the oxygen-evolving complex and a large number of cofactors. It forms dimeric complexes.

The protein localises to the plastid. It is found in the chloroplast thylakoid membrane. A core subunit of photosystem II (PSII), probably helps stabilize the reaction center. The polypeptide is Photosystem II reaction center protein Psb30 (Emiliania huxleyi (Coccolithophore)).